Consider the following 260-residue polypeptide: MSDTSLTHCSEVLLTARNLCADRGGRRVLEGIDLSIGAGEVVTIIGPNGAGKSTLLKVLLGVEPYSEGQVIRKANLCVGYVPQRMPVDAILPMTVQRMLRLAKEVDETAMLAVLEETGVAHVLHAPLQGLSGGEFQRVLLARAMLRNPQLLVLDEPVQGVDYSGEVALYQLIGALRKRHGCGVLLVSHDLHMVMRDTDRVVCLNRHICCTGTPDHVSGHPEFARLFGDQALQTLALYQHHHHSCTHHMPVDVAIDPQEQA.

The region spanning 14–229 (LTARNLCADR…PEFARLFGDQ (216 aa)) is the ABC transporter domain. 46–53 (GPNGAGKS) is an ATP binding site.

Belongs to the ABC transporter superfamily. Zinc importer (TC 3.A.1.15.5) family. In terms of assembly, the complex is composed of two ATP-binding proteins (ZnuC), two transmembrane proteins (ZnuB) and a solute-binding protein (ZnuA).

It is found in the cell inner membrane. It catalyses the reaction Zn(2+)(out) + ATP(in) + H2O(in) = Zn(2+)(in) + ADP(in) + phosphate(in) + H(+)(in). Part of the ABC transporter complex ZnuABC involved in zinc import. Responsible for energy coupling to the transport system. The sequence is that of Zinc import ATP-binding protein ZnuC from Magnetococcus marinus (strain ATCC BAA-1437 / JCM 17883 / MC-1).